A 321-amino-acid chain; its full sequence is Glutaminase (321 aa).

Residues serine 69, asparagine 120, glutamate 165, asparagine 172, tyrosine 196, tyrosine 248, and valine 266 each coordinate substrate.

The protein belongs to the glutaminase family. Homotetramer.

The enzyme catalyses L-glutamine + H2O = L-glutamate + NH4(+). The polypeptide is Glutaminase (Bacteroides fragilis (strain ATCC 25285 / DSM 2151 / CCUG 4856 / JCM 11019 / LMG 10263 / NCTC 9343 / Onslow / VPI 2553 / EN-2)).